A 447-amino-acid polypeptide reads, in one-letter code: Phosphoglucosamine mutase (447 aa).

Catalysis depends on serine 106, which acts as the Phosphoserine intermediate. The Mg(2+) site is built by serine 106, aspartate 245, aspartate 247, and aspartate 249. Serine 106 carries the phosphoserine modification.

It belongs to the phosphohexose mutase family. Requires Mg(2+) as cofactor. Activated by phosphorylation.

It carries out the reaction alpha-D-glucosamine 1-phosphate = D-glucosamine 6-phosphate. In terms of biological role, catalyzes the conversion of glucosamine-6-phosphate to glucosamine-1-phosphate. This chain is Phosphoglucosamine mutase, found in Cupriavidus metallidurans (strain ATCC 43123 / DSM 2839 / NBRC 102507 / CH34) (Ralstonia metallidurans).